A 1204-amino-acid polypeptide reads, in one-letter code: Erythroid differentiation-related factor 1 (1204 aa).

Disordered stretches follow at residues 1-30, 220-264, 483-527, and 586-613; these read MGDA…QAES, QPVS…ASSQ, PKKE…SDDS, and KKES…RGGP. Composition is skewed to low complexity over residues 9-30, 223-241, and 253-263; these read AEGP…QAES, SSTT…NDSE, and SSVSEDPSASS. Acidic residues predominate over residues 496-513; it reads NSDESYSEEEEEMPDSDE. TPR repeat units lie at residues 693 to 726 and 920 to 953; these read CCLC…QNAN and DIHP…LSRK.

It localises to the nucleus. In terms of biological role, transcription factor involved in erythroid differentiation. Involved in transcriptional activation of the globin gene. This is Erythroid differentiation-related factor 1 (EDRF1) from Pongo abelii (Sumatran orangutan).